A 138-amino-acid chain; its full sequence is MRFFLAITALVAAVTAAPSADVAAVNQMAAMTLAEADASCGNGASLYCCDKSKQGGDTGSPGQAGGVGLLGAIVGVNGLLQGLLGQCSKININAIGAAGVLNQECTARAACCQNTPSVAHHGLVNIALPCIPINSLVG.

Residues 1 to 16 form the signal peptide; it reads MRFFLAITALVAAVTA. Intrachain disulfides connect cysteine 40-cysteine 111, cysteine 48-cysteine 105, cysteine 49-cysteine 87, and cysteine 112-cysteine 130.

Belongs to the fungal hydrophobin family. Self-assembles to form functional amyloid fibrils called rodlets. Self-assembly into fibrillar rodlets occurs spontaneously at hydrophobic:hydrophilic interfaces and the rodlets further associate laterally to form amphipathic monolayers.

Its subcellular location is the secreted. It localises to the cell wall. Functionally, aerial growth, conidiation, and dispersal of filamentous fungi in the environment rely upon a capability of their secreting small amphipathic proteins called hydrophobins (HPBs) with low sequence identity. Class I can self-assemble into an outermost layer of rodlet bundles on aerial cell surfaces, conferring cellular hydrophobicity that supports fungal growth, development and dispersal; whereas Class II form highly ordered films at water-air interfaces through intermolecular interactions but contribute nothing to the rodlet structure. HYD3 is a class I hydrophobin that contributes to the formation of aerial hyphae and fruiting bodies. This Cordyceps militaris (Caterpillar fungus) protein is Class I hydrophobin 3.